A 234-amino-acid chain; its full sequence is (5-formylfuran-3-yl)methyl phosphate synthase (234 aa).

The Schiff-base intermediate with substrate role is filled by Lys-27. Catalysis depends on Lys-85, which acts as the Proton acceptor.

This sequence belongs to the MfnB family.

The enzyme catalyses 2 D-glyceraldehyde 3-phosphate = 4-(hydroxymethyl)-2-furancarboxaldehyde phosphate + phosphate + 2 H2O. The protein operates within cofactor biosynthesis; methanofuran biosynthesis. Functionally, catalyzes the formation of 4-(hydroxymethyl)-2-furancarboxaldehyde phosphate (4-HFC-P) from two molecules of glyceraldehyde-3-P (GA-3-P). In Methanosarcina barkeri (strain Fusaro / DSM 804), this protein is (5-formylfuran-3-yl)methyl phosphate synthase.